The chain runs to 378 residues: Cell death-related nuclease 6 (378 aa).

Positions Met-1 to Ala-17 are cleaved as a signal peptide. 3 N-linked (GlcNAc...) asparagine glycosylation sites follow: Asn-51, Asn-92, and Asn-111.

This sequence belongs to the DNase II family.

Functionally, involved in apoptotic DNA degradation. The protein is Cell death-related nuclease 6 (crn-6) of Caenorhabditis elegans.